The primary structure comprises 354 residues: MKNKNKRLLVMAGGTGGHVFPGLAVAKQLQSEGWEIRWLGTADRMEADLVPKHGIEIDFIKVKGLRGQGLKKLIAAPFQILGAISQAKKHIKAWQPDVVLGMGGYVSGPGGIAAWLSGIPVVLHEQNAVAGLTNQWLSKIAKRVFQAFPGAFPNAEVVGNPVREDVCQLPHPKERFAQRTGPIRLLVMGGSQGARILNTTLPEALPQLSHEIEIWHQAGKGSQETVEQAYRDNGIADAKVTEFIDNVAEAYAWADLLVCRSGALTVSEVSAAGVGSIFIPFMHKDRQQALNADHLVQCGAAQMIEQQDLTVQGLVDTLNGLERKQLLEMACNARDAAIIDADVRVANAIKSLAK.

Residues 15–17, Asn127, Arg163, Ser191, Ile244, 263–268, and Gln288 each bind UDP-N-acetyl-alpha-D-glucosamine; these read TGG and ALTVSE.

Belongs to the glycosyltransferase 28 family. MurG subfamily.

The protein resides in the cell inner membrane. It carries out the reaction di-trans,octa-cis-undecaprenyl diphospho-N-acetyl-alpha-D-muramoyl-L-alanyl-D-glutamyl-meso-2,6-diaminopimeloyl-D-alanyl-D-alanine + UDP-N-acetyl-alpha-D-glucosamine = di-trans,octa-cis-undecaprenyl diphospho-[N-acetyl-alpha-D-glucosaminyl-(1-&gt;4)]-N-acetyl-alpha-D-muramoyl-L-alanyl-D-glutamyl-meso-2,6-diaminopimeloyl-D-alanyl-D-alanine + UDP + H(+). The protein operates within cell wall biogenesis; peptidoglycan biosynthesis. Cell wall formation. Catalyzes the transfer of a GlcNAc subunit on undecaprenyl-pyrophosphoryl-MurNAc-pentapeptide (lipid intermediate I) to form undecaprenyl-pyrophosphoryl-MurNAc-(pentapeptide)GlcNAc (lipid intermediate II). The protein is UDP-N-acetylglucosamine--N-acetylmuramyl-(pentapeptide) pyrophosphoryl-undecaprenol N-acetylglucosamine transferase of Aliivibrio fischeri (strain ATCC 700601 / ES114) (Vibrio fischeri).